The chain runs to 275 residues: Large ribosomal subunit protein uL2 (275 aa).

2 disordered regions span residues 24-47 and 227-261; these read IHKG…NHHG and PVDH…KTRK.

It belongs to the universal ribosomal protein uL2 family. As to quaternary structure, part of the 50S ribosomal subunit. Forms a bridge to the 30S subunit in the 70S ribosome.

One of the primary rRNA binding proteins. Required for association of the 30S and 50S subunits to form the 70S ribosome, for tRNA binding and peptide bond formation. It has been suggested to have peptidyltransferase activity; this is somewhat controversial. Makes several contacts with the 16S rRNA in the 70S ribosome. The sequence is that of Large ribosomal subunit protein uL2 from Xylella fastidiosa (strain M12).